The sequence spans 757 residues: Amine oxidase [copper-containing] 2 (757 aa).

Residues 1–4 (MNLK) lie on the Cytoplasmic side of the membrane. Residues 5-25 (VLLLLLGLSFLTVFALVYVLL) form a helical membrane-spanning segment. The Extracellular segment spans residues 26-757 (TRQGSFSQSP…NLPSFSYEGL (732 aa)). N-linked (GlcNAc...) asparagine glycans are attached at residues Asn133, Asn198, and Asn226. Asp381 serves as the catalytic Proton acceptor. Residues Cys399 and Cys425 are joined by a disulfide bond. Catalysis depends on Tyr466, which acts as the Schiff-base intermediate with substrate; via topaquinone. Tyr466 carries the 2',4',5'-topaquinone modification. His517 and His519 together coordinate Cu(2+). Residues Asp526, Leu527, Asp528, Glu569, Glu638, Phe660, and Asn662 each coordinate Ca(2+). The N-linked (GlcNAc...) asparagine glycan is linked to Asn663. Glu664, Asp670, and Leu671 together coordinate Ca(2+). Residue His681 coordinates Cu(2+). Cys731 and Cys738 are joined by a disulfide.

This sequence belongs to the copper/topaquinone oxidase family. In terms of assembly, homodimer; disulfide-linked. Probably forms heterodimers with AOC3. Requires Cu(2+) as cofactor. It depends on Ca(2+) as a cofactor. L-topaquinone is required as a cofactor. In terms of processing, topaquinone (TPQ) is generated by copper-dependent autoxidation of a specific tyrosyl residue. As to expression, significantly much highly expressed in retina.

The protein localises to the cell membrane. The enzyme catalyses 2-phenylethylamine + O2 + H2O = 2-phenylacetaldehyde + H2O2 + NH4(+). The catalysed reaction is tryptamine + O2 + H2O = indole-3-acetaldehyde + H2O2 + NH4(+). It carries out the reaction tyramine + O2 + H2O = (4-hydroxyphenyl)acetaldehyde + H2O2 + NH4(+). Its function is as follows. Catalyzes the oxidative deamination of primary amines to the corresponding aldehydes with the concomitant production of hydrogen peroxide and ammonia. Has a preference for 2-phenylethylamine, tryptamine and tyramine. Could also act on methylamine and benzylamine but much less efficiently. This chain is Amine oxidase [copper-containing] 2, found in Mus musculus (Mouse).